A 704-amino-acid chain; its full sequence is Lebercilin (704 aa).

Positions 1–14 (MGERARSPDIEQGK) are enriched in basic and acidic residues. The interval 1-80 (MGERARSPDI…VSPKAVPSKK (80 aa)) is disordered. Position 7 is a phosphoserine (Ser-7). A compositionally biased stretch (low complexity) spans 25–40 (SSDLGSSPQSSGPSSP). Ser-48 bears the Phosphoserine mark. Residues 49–63 (TREKNPKRHLSDNQV) show a composition bias toward basic and acidic residues. Residues 105-300 (KRVLSARLLK…KEKELDIKNI (196 aa)) are a coiled coil. 2 disordered regions span residues 389–417 (QEGKYDEDEDPCSAKQEARKPESEWAREE) and 476–661 (ELQD…GDEE). A compositionally biased stretch (basic and acidic residues) spans 404–417 (QEARKPESEWAREE). Residues 448–479 (AQSVDKFEDEAERLKTEMLLAKLNEINKELQD) adopt a coiled-coil conformation. Basic and acidic residues predominate over residues 496–505 (SKLHSPDRST). The segment covering 570–591 (GKSNPPSQKSSLLDFQSNSSES) has biased composition (polar residues). A compositionally biased stretch (basic and acidic residues) spans 592–608 (PSKDSLDLMSRKEKKAT). Residues 617 to 627 (SASNTSVSSKS) show a composition bias toward low complexity.

The protein belongs to the LCA5 family. In terms of assembly, interacts with NINL. Interacts with OFD1. Interacts with FAM161A. Interacts with components of the IFT complex B. Detected in several tissues.

The protein localises to the cytoplasm. It is found in the cytoskeleton. It localises to the cilium axoneme. The protein resides in the cilium basal body. Its subcellular location is the cell projection. The protein localises to the cilium. In terms of biological role, involved in intraflagellar protein (IFT) transport in photoreceptor cilia. This chain is Lebercilin (Lca5), found in Mus musculus (Mouse).